A 569-amino-acid chain; its full sequence is Vacuolar protein sorting-associated protein 45 homolog (569 aa).

The protein belongs to the STXBP/unc-18/SEC1 family. In terms of assembly, interacts with both SYP41 or SYP42 and VTI12, but in different domains of the trans-Golgi network. Does not interact on the pervacuolar compartment with VTI11, SYP21 or SYP22, or on the cis-Golgi with SYP31. Interacts at the trans-Golgi network (TGN) with the SYP41/SYP61/VTI12 SNARE complex. As to expression, highly expressed in roots, lower expression in leaves, stems and flowers.

The protein resides in the golgi apparatus. It is found in the trans-Golgi network membrane. It localises to the early endosome. Functionally, involved in the protein transport to the vacuole, probably at the level of vesicle fusion at the trans-Golgi network (TGN) and not in transport from the TGN to the prevacuolar compartment, by promoting the recycling of vacuolar sorting receptors back to the TGN. Involved in early endosomal vesicle trafficking, particularly at the trans-Golgi-network/early endosome (TGN/EE) thus residing in early endocytic route. Together with BIG5/BEN1 required for polar PIN-FORMED (PIN) proteins localization, for their dynamic repolarization, and consequently for auxin activity gradient formation and auxin-related developmental processes (e.g. embryonic patterning, organogenesis and vasculature venation patterning). Necessary for pollen germination and for cell expansion. Binds syntaxins. This chain is Vacuolar protein sorting-associated protein 45 homolog, found in Arabidopsis thaliana (Mouse-ear cress).